Consider the following 504-residue polypeptide: Cytochrome P450 71B7 (504 aa).

A helical membrane pass occupies residues 1-21 (MSILLCFLCLLPVFLVSLSIL). A Glycyl lysine isopeptide (Lys-Gly) (interchain with G-Cter in ubiquitin) cross-link involves residue Lys82. Cys446 is a heme binding site.

This sequence belongs to the cytochrome P450 family. The cofactor is heme. In terms of tissue distribution, highly expressed in rosette leaves. Also expressed in roots, leaves, flowers, and siliques.

The protein resides in the membrane. The protein is Cytochrome P450 71B7 (CYP71B7) of Arabidopsis thaliana (Mouse-ear cress).